The following is a 256-amino-acid chain: Coiled-coil domain-containing protein 90B, mitochondrial (256 aa).

Residues 1 to 42 (MRNRWIWRFLRPECSGIRWISSPHGRLSPALRRGFLTTTTKS) constitute a mitochondrion transit peptide. Residues 106 to 164 (AQQEITIQQLMAHLDSIRKDMVILEKSEFANLRAENEKMKIELDQVKQQLINETSRIRA) adopt a coiled-coil conformation. The chain crosses the membrane as a helical span at residues 231 to 253 (TIRYLAASVFTCLAIALGFYRFW).

Belongs to the CCDC90 family. Interacts with MCU.

It is found in the mitochondrion membrane. The sequence is that of Coiled-coil domain-containing protein 90B, mitochondrial (Ccdc90b) from Rattus norvegicus (Rat).